The following is a 237-amino-acid chain: Phosphoribosylaminoimidazole-succinocarboxamide synthase (237 aa).

The protein belongs to the SAICAR synthetase family.

The catalysed reaction is 5-amino-1-(5-phospho-D-ribosyl)imidazole-4-carboxylate + L-aspartate + ATP = (2S)-2-[5-amino-1-(5-phospho-beta-D-ribosyl)imidazole-4-carboxamido]succinate + ADP + phosphate + 2 H(+). Its pathway is purine metabolism; IMP biosynthesis via de novo pathway; 5-amino-1-(5-phospho-D-ribosyl)imidazole-4-carboxamide from 5-amino-1-(5-phospho-D-ribosyl)imidazole-4-carboxylate: step 1/2. The sequence is that of Phosphoribosylaminoimidazole-succinocarboxamide synthase from Serratia proteamaculans (strain 568).